The chain runs to 872 residues: DNA mismatch repair protein MutS (872 aa).

602 to 609 (GPNMSGKS) serves as a coordination point for ATP.

It belongs to the DNA mismatch repair MutS family.

This protein is involved in the repair of mismatches in DNA. It is possible that it carries out the mismatch recognition step. This protein has a weak ATPase activity. This Staphylococcus aureus (strain MRSA252) protein is DNA mismatch repair protein MutS.